The chain runs to 126 residues: Large ribosomal subunit protein bL12 (126 aa).

It belongs to the bacterial ribosomal protein bL12 family. In terms of assembly, homodimer. Part of the ribosomal stalk of the 50S ribosomal subunit. Forms a multimeric L10(L12)X complex, where L10 forms an elongated spine to which 2 to 4 L12 dimers bind in a sequential fashion. Binds GTP-bound translation factors.

Its function is as follows. Forms part of the ribosomal stalk which helps the ribosome interact with GTP-bound translation factors. Is thus essential for accurate translation. The polypeptide is Large ribosomal subunit protein bL12 (Rhizobium meliloti (strain 1021) (Ensifer meliloti)).